We begin with the raw amino-acid sequence, 279 residues long: Single-strand selective monofunctional uracil DNA glycosylase (279 aa).

Residues M86, F100, and N165 each coordinate substrate. The interval 175–189 is DNA-binding; the sequence is SGRNLTPAELPAKQR. H241 contributes to the substrate binding site.

The protein belongs to the uracil-DNA glycosylase (UDG) superfamily. SMUG1 family.

Its subcellular location is the nucleus. In terms of biological role, recognizes base lesions in the genome and initiates base excision DNA repair. Acts as a monofunctional DNA glycosylase specific for uracil (U) residues in DNA with a preference for single-stranded DNA substrates. The activity is greater toward mismatches (U/G) compared to matches (U/A). Excises uracil (U), 5-formyluracil (fU) and uracil derivatives bearing an oxidized group at C5 [5-hydroxyuracil (hoU) and 5-hydroxymethyluracil (hmU)] in ssDNA and dsDNA, but not analogous cytosine derivatives (5-hydroxycytosine and 5-formylcytosine), nor other oxidized bases. The activity is damage-specific and salt-dependent. The substrate preference is the following: ssDNA &gt; dsDNA (G pair) = dsDNA (A pair) at low salt concentration, and dsDNA (G pair) &gt; dsDNA (A pair) &gt; ssDNA at high salt concentration. The chain is Single-strand selective monofunctional uracil DNA glycosylase (Smug1) from Mus musculus (Mouse).